An 83-amino-acid polypeptide reads, in one-letter code: Large ribosomal subunit protein bL27 (83 aa).

Belongs to the bacterial ribosomal protein bL27 family.

The protein is Large ribosomal subunit protein bL27 (rpmA) of Thermotoga maritima (strain ATCC 43589 / DSM 3109 / JCM 10099 / NBRC 100826 / MSB8).